Consider the following 614-residue polypeptide: uncharacterized protein (614 aa).

The next 2 membrane-spanning stretches (helical) occupy residues 494-516 (VAYWSFGALCIAVPIALILGSTL) and 552-574 (LLIGTGVAVGVAVILSINFIVHA). Residues 588–614 (AVRPRADKDIQTLTHRDEAEEDQEEDS) are disordered. Residues 591–605 (PRADKDIQTLTHRDE) are compositionally biased toward basic and acidic residues.

It localises to the cell membrane. This is an uncharacterized protein from Treponema pallidum (strain Nichols).